We begin with the raw amino-acid sequence, 409 residues long: Glucose-1-phosphate adenylyltransferase (409 aa).

Residues Gly-168, 183 to 184, and Ser-201 each bind alpha-D-glucose 1-phosphate; that span reads EK.

This sequence belongs to the bacterial/plant glucose-1-phosphate adenylyltransferase family. As to quaternary structure, homotetramer.

The enzyme catalyses alpha-D-glucose 1-phosphate + ATP + H(+) = ADP-alpha-D-glucose + diphosphate. It participates in glycan biosynthesis; glycogen biosynthesis. Involved in the biosynthesis of ADP-glucose, a building block required for the elongation reactions to produce glycogen. Catalyzes the reaction between ATP and alpha-D-glucose 1-phosphate (G1P) to produce pyrophosphate and ADP-Glc. The sequence is that of Glucose-1-phosphate adenylyltransferase from Corynebacterium efficiens (strain DSM 44549 / YS-314 / AJ 12310 / JCM 11189 / NBRC 100395).